An 840-amino-acid chain; its full sequence is Protein translocase subunit SecA (840 aa).

Residues glutamine 87, 105 to 109 (GEGKT), and aspartate 494 each bind ATP. The disordered stretch occupies residues 791 to 840 (LRKEQEDQPMFFGPAEGAGQKPQTRKDRKVGRNDPCPCGSGKKYKKCCGK). Residues cysteine 826, cysteine 828, cysteine 837, and cysteine 838 each contribute to the Zn(2+) site.

Belongs to the SecA family. As to quaternary structure, monomer and homodimer. Part of the essential Sec protein translocation apparatus which comprises SecA, SecYEG and auxiliary proteins SecDF-YajC and YidC. Zn(2+) is required as a cofactor.

The protein resides in the cell inner membrane. Its subcellular location is the cytoplasm. It carries out the reaction ATP + H2O + cellular proteinSide 1 = ADP + phosphate + cellular proteinSide 2.. Functionally, part of the Sec protein translocase complex. Interacts with the SecYEG preprotein conducting channel. Has a central role in coupling the hydrolysis of ATP to the transfer of proteins into and across the cell membrane, serving as an ATP-driven molecular motor driving the stepwise translocation of polypeptide chains across the membrane. This Syntrophobacter fumaroxidans (strain DSM 10017 / MPOB) protein is Protein translocase subunit SecA.